A 490-amino-acid polypeptide reads, in one-letter code: uncharacterized protein (490 aa).

The helical transmembrane segment at 27-47 (VYVFLTTIILLLSLISTLIII) threads the bilayer.

The protein localises to the membrane. This is an uncharacterized protein from Borreliella burgdorferi (strain ATCC 35210 / DSM 4680 / CIP 102532 / B31) (Borrelia burgdorferi).